A 151-amino-acid polypeptide reads, in one-letter code: Deoxyuridine 5'-triphosphate nucleotidohydrolase (151 aa).

Substrate is bound by residues 70 to 72 (RSG), Asn83, 87 to 89 (LID), and Met97.

The protein belongs to the dUTPase family. The cofactor is Mg(2+).

It carries out the reaction dUTP + H2O = dUMP + diphosphate + H(+). It participates in pyrimidine metabolism; dUMP biosynthesis; dUMP from dCTP (dUTP route): step 2/2. Its function is as follows. This enzyme is involved in nucleotide metabolism: it produces dUMP, the immediate precursor of thymidine nucleotides and it decreases the intracellular concentration of dUTP so that uracil cannot be incorporated into DNA. The polypeptide is Deoxyuridine 5'-triphosphate nucleotidohydrolase (Stutzerimonas stutzeri (strain A1501) (Pseudomonas stutzeri)).